Reading from the N-terminus, the 63-residue chain is Large ribosomal subunit protein bL28 (63 aa).

This sequence belongs to the bacterial ribosomal protein bL28 family.

The protein is Large ribosomal subunit protein bL28 of Clostridium novyi (strain NT).